We begin with the raw amino-acid sequence, 390 residues long: S-adenosylmethionine synthase (390 aa).

An ATP-binding site is contributed by His-17. Asp-19 contributes to the Mg(2+) binding site. Position 45 (Glu-45) interacts with K(+). The L-methionine site is built by Glu-58 and Gln-101. The tract at residues 101–111 is flexible loop; it reads QSPDIGQGVDT. ATP contacts are provided by residues 160-162, 226-227, Asp-235, 241-242, Ala-258, and Lys-262; these read DGK, RF, and RK. Asp-235 contacts L-methionine. Residue Lys-266 participates in L-methionine binding.

This sequence belongs to the AdoMet synthase family. Homotetramer; dimer of dimers. Requires Mg(2+) as cofactor. K(+) is required as a cofactor.

It is found in the cytoplasm. The catalysed reaction is L-methionine + ATP + H2O = S-adenosyl-L-methionine + phosphate + diphosphate. It participates in amino-acid biosynthesis; S-adenosyl-L-methionine biosynthesis; S-adenosyl-L-methionine from L-methionine: step 1/1. Its function is as follows. Catalyzes the formation of S-adenosylmethionine (AdoMet) from methionine and ATP. The overall synthetic reaction is composed of two sequential steps, AdoMet formation and the subsequent tripolyphosphate hydrolysis which occurs prior to release of AdoMet from the enzyme. The polypeptide is S-adenosylmethionine synthase (Anaeromyxobacter dehalogenans (strain 2CP-1 / ATCC BAA-258)).